Here is a 77-residue protein sequence, read N- to C-terminus: DPYKERIKSDIRQINESQYLKSLAYKYISGEDYTQYLLLNEVLKDDQDYCTCTRRTIYEESMDNTVEFAKKMYELSA.

This is an uncharacterized protein from Plasmodium falciparum (isolate fcm17 / Senegal).